We begin with the raw amino-acid sequence, 342 residues long: Type II restriction enzyme CviAII (342 aa).

It catalyses the reaction Endonucleolytic cleavage of DNA to give specific double-stranded fragments with terminal 5'-phosphates.. Its function is as follows. A P subtype restriction enzyme that recognizes the double-stranded sequence 5'-CATG-3' and cleaves after C-1. The chain is Type II restriction enzyme CviAII (CVIAIIR) from Chlorella (PBCV-1).